Here is a 266-residue protein sequence, read N- to C-terminus: DNA-directed RNA polymerase subunit Rpo3 (266 aa).

[3Fe-4S] cluster is bound by residues C205, C208, and C211.

The protein belongs to the archaeal Rpo3/eukaryotic RPB3 RNA polymerase subunit family. In terms of assembly, part of the RNA polymerase complex. [3Fe-4S] cluster serves as cofactor.

It is found in the cytoplasm. The catalysed reaction is RNA(n) + a ribonucleoside 5'-triphosphate = RNA(n+1) + diphosphate. In terms of biological role, DNA-dependent RNA polymerase (RNAP) catalyzes the transcription of DNA into RNA using the four ribonucleoside triphosphates as substrates. The protein is DNA-directed RNA polymerase subunit Rpo3 of Methanosarcina acetivorans (strain ATCC 35395 / DSM 2834 / JCM 12185 / C2A).